A 399-amino-acid polypeptide reads, in one-letter code: Tryptophan synthase beta chain (399 aa).

Residue Lys90 is modified to N6-(pyridoxal phosphate)lysine.

It belongs to the TrpB family. Tetramer of two alpha and two beta chains. Pyridoxal 5'-phosphate serves as cofactor.

It catalyses the reaction (1S,2R)-1-C-(indol-3-yl)glycerol 3-phosphate + L-serine = D-glyceraldehyde 3-phosphate + L-tryptophan + H2O. It participates in amino-acid biosynthesis; L-tryptophan biosynthesis; L-tryptophan from chorismate: step 5/5. In terms of biological role, the beta subunit is responsible for the synthesis of L-tryptophan from indole and L-serine. The chain is Tryptophan synthase beta chain from Phocaeicola vulgatus (strain ATCC 8482 / DSM 1447 / JCM 5826 / CCUG 4940 / NBRC 14291 / NCTC 11154) (Bacteroides vulgatus).